A 125-amino-acid chain; its full sequence is Protein JAZ13 (125 aa).

Positions 6 to 10 (LDLHL) match the EAR motif. The interval 99 to 125 (KKRSKSFTLTPNYTSSTSSSSSSLHNF) is disordered. Positions 112-125 (TSSTSSSSSSLHNF) are enriched in low complexity.

Monomer. Lack of homodimerization, and very weak or no interaction with AFPH2/NINJA and other JAZ proteins. Interacts (via EAR motif) with TPL. Interacts (via jas motif) with MYC2. Phosphorylated at multiple serine residues.

Functionally, non-TIFY functional repressor of jasmonate (JA)-mediated growth and defense responses. Intrinsically resistant to JA-induced turnover, probably due to the absence of the canonical degron that strongly interacts with COI1 in the presence of JA-Ile in the TIFY/JAZ proteins. This chain is Protein JAZ13, found in Arabidopsis thaliana (Mouse-ear cress).